Here is a 161-residue protein sequence, read N- to C-terminus: Regulator of ribonuclease activity A (161 aa).

This sequence belongs to the RraA family. In terms of assembly, homotrimer. Binds to both RNA-binding sites in the C-terminal region of Rne and to RhlB.

It localises to the cytoplasm. Its function is as follows. Globally modulates RNA abundance by binding to RNase E (Rne) and regulating its endonucleolytic activity. Can modulate Rne action in a substrate-dependent manner by altering the composition of the degradosome. Modulates RNA-binding and helicase activities of the degradosome. The protein is Regulator of ribonuclease activity A of Enterobacter sp. (strain 638).